Reading from the N-terminus, the 341-residue chain is L-threonine 3-dehydrogenase (341 aa).

Cysteine 38 is a binding site for Zn(2+). Residues threonine 40 and histidine 43 each act as charge relay system in the active site. 6 residues coordinate Zn(2+): histidine 63, glutamate 64, cysteine 93, cysteine 96, cysteine 99, and cysteine 107. NAD(+) contacts are provided by residues isoleucine 175, aspartate 195, arginine 200, 262–264 (LGI), and 286–287 (IY).

It belongs to the zinc-containing alcohol dehydrogenase family. Homotetramer. It depends on Zn(2+) as a cofactor.

Its subcellular location is the cytoplasm. The catalysed reaction is L-threonine + NAD(+) = (2S)-2-amino-3-oxobutanoate + NADH + H(+). Its pathway is amino-acid degradation; L-threonine degradation via oxydo-reductase pathway; glycine from L-threonine: step 1/2. Functionally, catalyzes the NAD(+)-dependent oxidation of L-threonine to 2-amino-3-ketobutyrate. This Serratia proteamaculans (strain 568) protein is L-threonine 3-dehydrogenase.